The following is a 517-amino-acid chain: Ribonuclease Y (517 aa).

Residues 3–23 (AILYVIVAVIALILGGAAGVA) traverse the membrane as a helical segment. The KH domain maps to 207 to 292 (TVTVVSLPND…EMVEKAQKEV (86 aa)). One can recognise an HD domain in the interval 333–426 (VLKHSIEVAH…VAAADAISAA (94 aa)).

This sequence belongs to the RNase Y family.

The protein localises to the cell membrane. Endoribonuclease that initiates mRNA decay. This Symbiobacterium thermophilum (strain DSM 24528 / JCM 14929 / IAM 14863 / T) protein is Ribonuclease Y.